A 122-amino-acid chain; its full sequence is Large ribosomal subunit protein uL14 (122 aa).

It belongs to the universal ribosomal protein uL14 family. Part of the 50S ribosomal subunit. Forms a cluster with proteins L3 and L19. In the 70S ribosome, L14 and L19 interact and together make contacts with the 16S rRNA in bridges B5 and B8.

Functionally, binds to 23S rRNA. Forms part of two intersubunit bridges in the 70S ribosome. This chain is Large ribosomal subunit protein uL14, found in Syntrophomonas wolfei subsp. wolfei (strain DSM 2245B / Goettingen).